A 571-amino-acid chain; its full sequence is Proline--tRNA ligase (571 aa).

It belongs to the class-II aminoacyl-tRNA synthetase family. ProS type 1 subfamily. In terms of assembly, homodimer.

The protein resides in the cytoplasm. The catalysed reaction is tRNA(Pro) + L-proline + ATP = L-prolyl-tRNA(Pro) + AMP + diphosphate. Functionally, catalyzes the attachment of proline to tRNA(Pro) in a two-step reaction: proline is first activated by ATP to form Pro-AMP and then transferred to the acceptor end of tRNA(Pro). As ProRS can inadvertently accommodate and process non-cognate amino acids such as alanine and cysteine, to avoid such errors it has two additional distinct editing activities against alanine. One activity is designated as 'pretransfer' editing and involves the tRNA(Pro)-independent hydrolysis of activated Ala-AMP. The other activity is designated 'posttransfer' editing and involves deacylation of mischarged Ala-tRNA(Pro). The misacylated Cys-tRNA(Pro) is not edited by ProRS. This is Proline--tRNA ligase from Acinetobacter baumannii (strain ATCC 17978 / DSM 105126 / CIP 53.77 / LMG 1025 / NCDC KC755 / 5377).